We begin with the raw amino-acid sequence, 295 residues long: Putative 23S rRNA (guanine-N(1)-)-methyltransferase (295 aa).

The Zn(2+) site is built by cysteine 11, cysteine 14, cysteine 31, and histidine 35. Residues tyrosine 74, 116–117 (TG), and histidine 204 contribute to the S-adenosyl-L-methionine site.

The protein belongs to the methyltransferase superfamily. RlmA family.

Its function is as follows. Confers strong resistance to mycinamicin (MM) and tylosin (TY). May function as methyltransferase. The chain is Putative 23S rRNA (guanine-N(1)-)-methyltransferase (myrA) from Micromonospora griseorubida.